The sequence spans 119 residues: MARFVVVALLVLLSLSGLEAVQRAPKIQVYSRHPAENGKPNFLNCYVSGFHPSDIEVDLLKNGKKIEKVEHSDLSFSKDWTFYLLYYTEFTPNEKDEYACRVSHVTFSTPKTVKWGRNI.

An N-terminal signal peptide occupies residues 1 to 20 (MARFVVVALLVLLSLSGLEA). Positions 25 to 114 (PKIQVYSRHP…VTFSTPKTVK (90 aa)) constitute an Ig-like C1-type domain. A disulfide bridge links C45 with C100.

It belongs to the beta-2-microglobulin family. As to quaternary structure, heterodimer of an alpha chain and a beta chain. Beta-2-microglobulin is the beta-chain of major histocompatibility complex class I molecules.

It localises to the secreted. Its function is as follows. Component of the class I major histocompatibility complex (MHC). Involved in the presentation of peptide antigens to the immune system. The polypeptide is Beta-2-microglobulin (B2M) (Callimico goeldii (Goeldi's marmoset)).